We begin with the raw amino-acid sequence, 257 residues long: Probable S-adenosylmethionine-dependent methyltransferase MSMEG_2350/MSMEI_2290 (257 aa).

It belongs to the methyltransferase superfamily.

Its function is as follows. Probable S-adenosylmethionine-dependent methyltransferase required for the 6-O-methylation of the polysaccharide backbone of 6-O-methylglucosyl lipopolysaccharides (MGLP). The polypeptide is Probable S-adenosylmethionine-dependent methyltransferase MSMEG_2350/MSMEI_2290 (Mycolicibacterium smegmatis (strain ATCC 700084 / mc(2)155) (Mycobacterium smegmatis)).